Reading from the N-terminus, the 104-residue chain is uncharacterized protein (104 aa).

A run of 2 helical transmembrane segments spans residues leucine 45–phenylalanine 65 and leucine 70–leucine 90.

The protein resides in the membrane. This is an uncharacterized protein from Saccharomyces cerevisiae (strain ATCC 204508 / S288c) (Baker's yeast).